The chain runs to 387 residues: Cysteine desulfurase IscS (387 aa).

Residues 73–74 (AT), Asn155, Gln183, and 203–205 (SAH) contribute to the pyridoxal 5'-phosphate site. N6-(pyridoxal phosphate)lysine is present on Lys206. Residue Thr241 coordinates pyridoxal 5'-phosphate. The active-site Cysteine persulfide intermediate is the Cys328. Cys328 lines the [2Fe-2S] cluster pocket.

Belongs to the class-V pyridoxal-phosphate-dependent aminotransferase family. NifS/IscS subfamily. In terms of assembly, homodimer. Forms a heterotetramer with IscU, interacts with other sulfur acceptors. Pyridoxal 5'-phosphate is required as a cofactor.

The protein localises to the cytoplasm. It catalyses the reaction (sulfur carrier)-H + L-cysteine = (sulfur carrier)-SH + L-alanine. It participates in cofactor biosynthesis; iron-sulfur cluster biosynthesis. In terms of biological role, master enzyme that delivers sulfur to a number of partners involved in Fe-S cluster assembly, tRNA modification or cofactor biosynthesis. Catalyzes the removal of elemental sulfur atoms from cysteine to produce alanine. Functions as a sulfur delivery protein for Fe-S cluster synthesis onto IscU, an Fe-S scaffold assembly protein, as well as other S acceptor proteins. In Helicobacter pylori (strain P12), this protein is Cysteine desulfurase IscS.